Here is a 456-residue protein sequence, read N- to C-terminus: MNTMALFGKVILLQFLIGVGFCMLMQDPKRNDTKSTYATCFRSQPQGNEPASPDCVKAFMAYAEDMKNIFHFTKEQINYLWSLERETQSLFHNHRRRKRQAVFLPVRKECRLLSEFERQNLFYTIRSLKMDTSNPNEYDTLANLHRGAVQPHAHDGSNFLGWHRVYLMYYERALRRIRGDVTLCFWDTTMDFNLGMDNWEYTAVFSSDFFGNRRGQVITGPFRDWPLPPGLTESDYLYRNMTRGRGMPFDSRAASSIFYNPNTIIHSTVTWEGFGFDTITNSQGQTRNITIEGEHNNVHNWVGGAMEFLDPAPQDPVFFFHHCYIDYVWERFREKMRRYFRDPTTDYPGHGNETLHDANYPMIGFEWFRNIDGYSDYFIQNVYRYESPTCQACYYSPYTVCGQGNQCIARMNYPGTEIEEGPQVPNSPVVAFSVAGGTMLMSAFNGRGFIATSNSE.

A signal peptide spans Met1–Cys22. Residues His145, His154, His163, His295, His299, and His322 each coordinate Cu cation.

Cu(2+) serves as cofactor. In terms of tissue distribution, prismatic layer of shell (at protein level).

Its subcellular location is the secreted. In Margaritifera margaritifera (Freshwater pearl mussel), this protein is Tyrosinase-like protein 2.